The sequence spans 314 residues: MKMVDELKGNLNSFLILLGIFSFLQFSFKQSFMFPSILPLNIPDSNLLLVIGNISFYFFFVFLLIVSMILSLTYKSLIPLTIILTISPFITLIPNYENSFLLYSLEIAILILGLASTIEGLIKSSLLSILLIPTLVLVNLGIYASILLNIFHNALFISYLTIYLISIAGYLAYVISWGKIKSLRNYIAISVGLLSMIPFIFFENIISHNRYLEILMNMILPSTLGITLYNPYHITLLVMALGLSTMGIVTSLIKGNVSSGVGYFLIITTVFLGIDGFSLLIYMLTPIIGFLVITSSEIESKRRLIDIISPTRNG.

8 consecutive transmembrane segments (helical) span residues 47 to 67 (LLLV…LIVS), 76 to 96 (SLIP…IPNY), 102 to 122 (LYSL…EGLI), 127 to 147 (LSIL…ASIL), 155 to 175 (LFIS…AYVI), 186 to 206 (YIAI…ENII), 233 to 253 (HITL…TSLI), and 264 to 284 (FLII…IYML).

Its subcellular location is the cell membrane. This chain is Cytochrome b558/566 subunit B (cbsB), found in Saccharolobus solfataricus (strain ATCC 35092 / DSM 1617 / JCM 11322 / P2) (Sulfolobus solfataricus).